We begin with the raw amino-acid sequence, 307 residues long: Aspartate carbamoyltransferase catalytic subunit (307 aa).

Carbamoyl phosphate is bound by residues R54 and T55. K83 contributes to the L-aspartate binding site. Carbamoyl phosphate is bound by residues R104, H132, and Q135. L-aspartate contacts are provided by R165 and R228. The carbamoyl phosphate site is built by L267 and P268.

Belongs to the aspartate/ornithine carbamoyltransferase superfamily. ATCase family. As to quaternary structure, heterododecamer (2C3:3R2) of six catalytic PyrB chains organized as two trimers (C3), and six regulatory PyrI chains organized as three dimers (R2).

It carries out the reaction carbamoyl phosphate + L-aspartate = N-carbamoyl-L-aspartate + phosphate + H(+). The protein operates within pyrimidine metabolism; UMP biosynthesis via de novo pathway; (S)-dihydroorotate from bicarbonate: step 2/3. In terms of biological role, catalyzes the condensation of carbamoyl phosphate and aspartate to form carbamoyl aspartate and inorganic phosphate, the committed step in the de novo pyrimidine nucleotide biosynthesis pathway. This chain is Aspartate carbamoyltransferase catalytic subunit, found in Clostridium perfringens (strain SM101 / Type A).